We begin with the raw amino-acid sequence, 74 residues long: Conotoxin Vc6.8 (74 aa).

Positions 1–19 (MEKLTILLLVAAVLMSTQA) are cleaved as a signal peptide. Positions 20–34 (LMQEQRQKAKINLFS) are excised as a propeptide. 3 disulfides stabilise this stretch: C49–C62, C55–C66, and C61–C70.

The protein belongs to the conotoxin O2 superfamily. Expressed by the venom duct.

Its subcellular location is the secreted. Functionally, inhibits voltage-gated ion channels. This chain is Conotoxin Vc6.8, found in Conus victoriae (Queen Victoria cone).